Here is a 255-residue protein sequence, read N- to C-terminus: 5-oxoprolinase subunit A (255 aa).

Belongs to the LamB/PxpA family. As to quaternary structure, forms a complex composed of PxpA, PxpB and PxpC.

It catalyses the reaction 5-oxo-L-proline + ATP + 2 H2O = L-glutamate + ADP + phosphate + H(+). Functionally, catalyzes the cleavage of 5-oxoproline to form L-glutamate coupled to the hydrolysis of ATP to ADP and inorganic phosphate. This chain is 5-oxoprolinase subunit A, found in Thermococcus sibiricus (strain DSM 12597 / MM 739).